Here is a 131-residue protein sequence, read N- to C-terminus: Agouti-signaling protein (131 aa).

Positions 1–20 (MNIFRLLLATLLVSLCFLTA) are cleaved as a signal peptide. N-linked (GlcNAc...) asparagine glycosylation occurs at N38. A disordered region spans residues 57-104 (KSKKISRKEAEKKRSSKKKASMKNVARPRPPPPNPCVATRNSCKSPAP). Disulfide bonds link C92-C107, C99-C113, C106-C124, C110-C131, and C115-C122. An Agouti domain is found at 92 to 131 (CVATRNSCKSPAPACCDPCASCQCRFFRSACTCRVLSPSC).

It is found in the secreted. Involved in the regulation of melanogenesis. The binding of ASP to MC1R precludes alpha-MSH initiated signaling and thus blocks production of cAMP, leading to a down-regulation of eumelanogenesis (brown/black pigment) and thus increasing synthesis of pheomelanin (yellow/red pigment). The chain is Agouti-signaling protein (ASIP) from Vulpes vulpes (Red fox).